Reading from the N-terminus, the 243-residue chain is Small ribosomal subunit protein uS3 (243 aa).

A KH type-2 domain is found at Ile39 to Glu110. The disordered stretch occupies residues Gly221–Ser243. A compositionally biased stretch (basic and acidic residues) spans Gln233–Ser243.

Belongs to the universal ribosomal protein uS3 family. Part of the 30S ribosomal subunit. Forms a tight complex with proteins S10 and S14.

Binds the lower part of the 30S subunit head. Binds mRNA in the 70S ribosome, positioning it for translation. This chain is Small ribosomal subunit protein uS3, found in Prochlorococcus marinus subsp. pastoris (strain CCMP1986 / NIES-2087 / MED4).